The chain runs to 101 residues: MAKQSMKAREVKRVALADKYFAKRAELKAIISDVNASDEERWNAVLKLQTLPRDSSPSRQRNRCRQTGRPHGFLRKFGLSRIKVREAAMRGEIPGLKKASW.

This sequence belongs to the universal ribosomal protein uS14 family. Part of the 30S ribosomal subunit. Contacts proteins S3 and S10.

In terms of biological role, binds 16S rRNA, required for the assembly of 30S particles and may also be responsible for determining the conformation of the 16S rRNA at the A site. This chain is Small ribosomal subunit protein uS14, found in Escherichia coli O8 (strain IAI1).